We begin with the raw amino-acid sequence, 379 residues long: Cytochrome b (379 aa).

4 consecutive transmembrane segments (helical) span residues 33–53 (FGSLLGLCLISQIITGLFLAM), 77–98 (WLIRNLHANGASFFFICLYLHI), 113–133 (WNIGVVLFLLVMMTAFVGYVL), and 178–198 (FFAFHFLFPFVVAGATMIHLL). Residues H83 and H97 each coordinate heme b. Heme b-binding residues include H182 and H196. An a ubiquinone-binding site is contributed by H201. Transmembrane regions (helical) follow at residues 226 to 246 (YKDLLGFIIMLTALTMLALFY), 288 to 308 (LGGVLALLSSILVLMVVPILH), 320 to 340 (ASQLLFWILVADMLVLTWIGG), and 347 to 367 (YIIIGQVASVLYFSLFLVLNP).

This sequence belongs to the cytochrome b family. In terms of assembly, the cytochrome bc1 complex contains 3 respiratory subunits (MT-CYB, CYC1 and UQCRFS1), 2 core proteins (UQCRC1 and UQCRC2) and probably 6 low-molecular weight proteins. Requires heme b as cofactor.

The protein localises to the mitochondrion inner membrane. Functionally, component of the ubiquinol-cytochrome c reductase complex (complex III or cytochrome b-c1 complex) that is part of the mitochondrial respiratory chain. The b-c1 complex mediates electron transfer from ubiquinol to cytochrome c. Contributes to the generation of a proton gradient across the mitochondrial membrane that is then used for ATP synthesis. This is Cytochrome b (mt-cyb) from Anguilla interioris (Highlands long-finned eel).